The following is a 468-amino-acid chain: Pentatricopeptide repeat-containing protein At5g46680 (468 aa).

PPR repeat units follow at residues 12–46 (STKLLNISVNSLCKFRNLERAETLLIDGIRLGVLP), 47–81 (DVITYNTLIKGYTRFIGIDEAYAVTRRMREAGIEP), 82–116 (DVTTYNSLISGAAKNLMLNRVLQLFDEMLHSGLSP), 117–152 (DMWSYNTLMSCYFKLGRHGEAFKILHEDIHLAGLVP), 153–183 (GIDTYNILLDALCKSGHTDNAIELFKHLKSR), 187–221 (ELMTYNILINGLCKSRRVGSVDWMMRELKKSGYTP), 222–256 (NAVTYTTMLKMYFKTKRIEKGLQLFLKMKKEGYTF), 257–291 (DGFANCAVVSALIKTGRAEEAYECMHELVRSGTRS), 293–327 (DIVSYNTLLNLYFKDGNLDAVDDLLEEIEMKGLKP), 328–362 (DDYTHTIIVNGLLNIGNTGGAEKHLACIGEMGMQP), 363–393 (SVVTCNCLIDGLCKAGHVDRAMRLFASMEVR), and 394–428 (DEFTYTSVVHNLCKDGRLVCASKLLLSCYNKGMKI).

This sequence belongs to the PPR family. P subfamily.

The polypeptide is Pentatricopeptide repeat-containing protein At5g46680 (Arabidopsis thaliana (Mouse-ear cress)).